A 184-amino-acid polypeptide reads, in one-letter code: Large ribosomal subunit protein uL15 (184 aa).

Residues 1–45 (MDLSSLRPAKGAVKNKKRVGRGQGSGNGTTAGKGNNGQQSRSGYK) are disordered. Gly residues predominate over residues 21 to 35 (RGQGSGNGTTAGKGN).

This sequence belongs to the universal ribosomal protein uL15 family. In terms of assembly, part of the 50S ribosomal subunit.

Its function is as follows. Binds to the 23S rRNA. The polypeptide is Large ribosomal subunit protein uL15 (Pelodictyon phaeoclathratiforme (strain DSM 5477 / BU-1)).